The following is a 368-amino-acid chain: Peptide chain release factor 2 (368 aa).

Q251 carries the post-translational modification N5-methylglutamine.

This sequence belongs to the prokaryotic/mitochondrial release factor family. Post-translationally, methylated by PrmC. Methylation increases the termination efficiency of RF2.

Its subcellular location is the cytoplasm. Peptide chain release factor 2 directs the termination of translation in response to the peptide chain termination codons UGA and UAA. This chain is Peptide chain release factor 2, found in Streptomyces avermitilis (strain ATCC 31267 / DSM 46492 / JCM 5070 / NBRC 14893 / NCIMB 12804 / NRRL 8165 / MA-4680).